The sequence spans 159 residues: Ribosomal RNA large subunit methyltransferase H (159 aa).

Residues leucine 76, glycine 108, and 127–132 contribute to the S-adenosyl-L-methionine site; that span reads FGRLTL.

It belongs to the RNA methyltransferase RlmH family. Homodimer.

The protein localises to the cytoplasm. It catalyses the reaction pseudouridine(1915) in 23S rRNA + S-adenosyl-L-methionine = N(3)-methylpseudouridine(1915) in 23S rRNA + S-adenosyl-L-homocysteine + H(+). In terms of biological role, specifically methylates the pseudouridine at position 1915 (m3Psi1915) in 23S rRNA. The sequence is that of Ribosomal RNA large subunit methyltransferase H from Streptococcus pneumoniae (strain 70585).